We begin with the raw amino-acid sequence, 416 residues long: Multifunctional CCA protein (416 aa).

ATP is bound by residues G8 and R11. The CTP site is built by G8 and R11. Mg(2+) contacts are provided by D21 and D23. ATP is bound by residues R91, R137, and R140. Residues R91, R137, and R140 each coordinate CTP. The 102-residue stretch at 228–329 (TGVHTLMVLA…VKIFDKADFW (102 aa)) folds into the HD domain.

The protein belongs to the tRNA nucleotidyltransferase/poly(A) polymerase family. Bacterial CCA-adding enzyme type 1 subfamily. In terms of assembly, monomer. Can also form homodimers and oligomers. It depends on Mg(2+) as a cofactor. The cofactor is Ni(2+).

The catalysed reaction is a tRNA precursor + 2 CTP + ATP = a tRNA with a 3' CCA end + 3 diphosphate. It carries out the reaction a tRNA with a 3' CCA end + 2 CTP + ATP = a tRNA with a 3' CCACCA end + 3 diphosphate. Catalyzes the addition and repair of the essential 3'-terminal CCA sequence in tRNAs without using a nucleic acid template. Adds these three nucleotides in the order of C, C, and A to the tRNA nucleotide-73, using CTP and ATP as substrates and producing inorganic pyrophosphate. tRNA 3'-terminal CCA addition is required both for tRNA processing and repair. Also involved in tRNA surveillance by mediating tandem CCA addition to generate a CCACCA at the 3' terminus of unstable tRNAs. While stable tRNAs receive only 3'-terminal CCA, unstable tRNAs are marked with CCACCA and rapidly degraded. The polypeptide is Multifunctional CCA protein (Shewanella baltica (strain OS155 / ATCC BAA-1091)).